The chain runs to 185 residues: Large ribosomal subunit protein uL5 (185 aa).

Belongs to the universal ribosomal protein uL5 family. Part of the 50S ribosomal subunit; part of the 5S rRNA/L5/L18/L25 subcomplex. Contacts the 5S rRNA and the P site tRNA. Forms a bridge to the 30S subunit in the 70S ribosome.

Functionally, this is one of the proteins that bind and probably mediate the attachment of the 5S RNA into the large ribosomal subunit, where it forms part of the central protuberance. In the 70S ribosome it contacts protein S13 of the 30S subunit (bridge B1b), connecting the 2 subunits; this bridge is implicated in subunit movement. Contacts the P site tRNA; the 5S rRNA and some of its associated proteins might help stabilize positioning of ribosome-bound tRNAs. This is Large ribosomal subunit protein uL5 from Xanthobacter autotrophicus (strain ATCC BAA-1158 / Py2).